The chain runs to 130 residues: Large ribosomal subunit protein bL19 (130 aa).

Belongs to the bacterial ribosomal protein bL19 family.

In terms of biological role, this protein is located at the 30S-50S ribosomal subunit interface and may play a role in the structure and function of the aminoacyl-tRNA binding site. The chain is Large ribosomal subunit protein bL19 from Cupriavidus taiwanensis (strain DSM 17343 / BCRC 17206 / CCUG 44338 / CIP 107171 / LMG 19424 / R1) (Ralstonia taiwanensis (strain LMG 19424)).